Consider the following 308-residue polypeptide: Pantothenate kinase (308 aa).

Residue 93 to 100 participates in ATP binding; the sequence is GSVAVGKS.

The protein belongs to the prokaryotic pantothenate kinase family.

Its subcellular location is the cytoplasm. The enzyme catalyses (R)-pantothenate + ATP = (R)-4'-phosphopantothenate + ADP + H(+). It functions in the pathway cofactor biosynthesis; coenzyme A biosynthesis; CoA from (R)-pantothenate: step 1/5. The protein is Pantothenate kinase of Corynebacterium diphtheriae (strain ATCC 700971 / NCTC 13129 / Biotype gravis).